A 302-amino-acid polypeptide reads, in one-letter code: L-threonate dehydrogenase (302 aa).

NAD(+) contacts are provided by residues Phe7–Ala35 and Thr102. Lys178 is an active-site residue. Lys246 lines the NAD(+) pocket.

This sequence belongs to the HIBADH-related family. L-threonate dehydrogenase subfamily.

It catalyses the reaction L-threonate + NAD(+) = 2-dehydro-L-erythronate + NADH + H(+). Its function is as follows. Catalyzes oxidation of L-threonate to 2-oxo-tetronate. Can use either NAD(+) or NADP(+) as cosubstrate, with a preference for NAD(+). This chain is L-threonate dehydrogenase, found in Escherichia coli (strain K12).